Consider the following 159-residue polypeptide: Ribosomal RNA large subunit methyltransferase H (159 aa).

S-adenosyl-L-methionine contacts are provided by residues Gly108 and 127 to 132 (FSKMTF).

This sequence belongs to the RNA methyltransferase RlmH family. As to quaternary structure, homodimer.

The protein resides in the cytoplasm. It catalyses the reaction pseudouridine(1915) in 23S rRNA + S-adenosyl-L-methionine = N(3)-methylpseudouridine(1915) in 23S rRNA + S-adenosyl-L-homocysteine + H(+). Its function is as follows. Specifically methylates the pseudouridine at position 1915 (m3Psi1915) in 23S rRNA. This is Ribosomal RNA large subunit methyltransferase H from Clostridium perfringens (strain ATCC 13124 / DSM 756 / JCM 1290 / NCIMB 6125 / NCTC 8237 / Type A).